The sequence spans 159 residues: Vesicle transport protein SFT2A (159 aa).

Topologically, residues 1 to 36 (MEKLRRVLSGQDDEEQGLTAQVLDASSLSFNTRLKW) are cytoplasmic. Serine 9 carries the post-translational modification Phosphoserine. A helical transmembrane segment spans residues 37–57 (FAICFVCGVFFSILGTGLLWL). The Lumenal segment spans residues 58–62 (PGGIK). Residues 63-83 (LFAVFYTLGNLAALASTCFLM) traverse the membrane as a helical segment. Over 84 to 97 (GPVKQLKKMFEATR) the chain is Cytoplasmic. Residues 98–118 (LLATIVMLLCFIFTLCAALWW) form a helical membrane-spanning segment. Topologically, residues 119–122 (HKKG) are lumenal. A helical membrane pass occupies residues 123 to 143 (LAVLFCILQFLSMTWYSLSYI). Residues 144-159 (PYARDAVIKCCSSLLS) are Cytoplasmic-facing.

Belongs to the SFT2 family.

The protein resides in the membrane. May be involved in fusion of retrograde transport vesicles derived from an endocytic compartment with the Golgi complex. The chain is Vesicle transport protein SFT2A from Homo sapiens (Human).